The chain runs to 793 residues: Coiled-coil domain-containing protein 175 (793 aa).

Coiled-coil stretches lie at residues 131 to 163 (EINT…NEAL), 205 to 377 (KRED…VLSE), 431 to 535 (KTVY…MLMK), 562 to 679 (LPQL…KYRE), and 716 to 745 (LVDN…QHVS).

The chain is Coiled-coil domain-containing protein 175 (CCDC175) from Homo sapiens (Human).